The sequence spans 245 residues: Sugar fermentation stimulation protein homolog (245 aa).

The protein belongs to the SfsA family.

In Yersinia pseudotuberculosis serotype I (strain IP32953), this protein is Sugar fermentation stimulation protein homolog.